A 263-amino-acid polypeptide reads, in one-letter code: Glutamate racemase (263 aa).

Residues 13–14 and 45–46 each bind substrate; these read DS and YG. Residue Cys-77 is the Proton donor/acceptor of the active site. 78–79 contributes to the substrate binding site; it reads NT. The Proton donor/acceptor role is filled by Cys-185. Position 186-187 (186-187) interacts with substrate; sequence TH.

The protein belongs to the aspartate/glutamate racemases family.

It catalyses the reaction L-glutamate = D-glutamate. It functions in the pathway cell wall biogenesis; peptidoglycan biosynthesis. In terms of biological role, provides the (R)-glutamate required for cell wall biosynthesis. This is Glutamate racemase from Vibrio vulnificus (strain YJ016).